The sequence spans 363 residues: S-adenosylmethionine:tRNA ribosyltransferase-isomerase (363 aa).

It belongs to the QueA family. As to quaternary structure, monomer.

It is found in the cytoplasm. The catalysed reaction is 7-aminomethyl-7-carbaguanosine(34) in tRNA + S-adenosyl-L-methionine = epoxyqueuosine(34) in tRNA + adenine + L-methionine + 2 H(+). It participates in tRNA modification; tRNA-queuosine biosynthesis. In terms of biological role, transfers and isomerizes the ribose moiety from AdoMet to the 7-aminomethyl group of 7-deazaguanine (preQ1-tRNA) to give epoxyqueuosine (oQ-tRNA). The protein is S-adenosylmethionine:tRNA ribosyltransferase-isomerase of Brucella abortus (strain S19).